The following is an 836-amino-acid chain: Translation initiation factor IF-2 (836 aa).

Positions 1 to 17 (MLRLMRQKKLSIQRRTK) are enriched in basic residues. Disordered regions lie at residues 1-43 (MLRL…RTVK) and 83-240 (AAKK…KGAA). Low complexity predominate over residues 18 to 27 (TTVSSTTTGG). Basic and acidic residues predominate over residues 83–153 (AAKKEADEKV…AAEEAKRYAE (71 aa)). The segment covering 154–167 (ADDSDNESSSEDYS) has biased composition (acidic residues). A compositionally biased stretch (basic residues) spans 192 to 202 (RGKNKVAKAKK). Residues 203–229 (GGRDDENSKNSKNERESNRKNQKDAKF) show a composition bias toward basic and acidic residues. Residues 335 to 505 (TRAPVVTIMG…LLQSEVLELT (171 aa)) form the tr-type G domain. The interval 344–351 (GHVDHGKT) is G1. 344–351 (GHVDHGKT) provides a ligand contact to GTP. Residues 369 to 373 (GITQH) form a G2 region. Positions 391–394 (DTPG) are G3. GTP is bound by residues 391–395 (DTPGH) and 445–448 (NKID). Residues 445–448 (NKID) are G4. Residues 481–483 (SAK) are G5.

Belongs to the TRAFAC class translation factor GTPase superfamily. Classic translation factor GTPase family. IF-2 subfamily.

The protein localises to the cytoplasm. In terms of biological role, one of the essential components for the initiation of protein synthesis. Protects formylmethionyl-tRNA from spontaneous hydrolysis and promotes its binding to the 30S ribosomal subunits. Also involved in the hydrolysis of GTP during the formation of the 70S ribosomal complex. The polypeptide is Translation initiation factor IF-2 (Haemophilus influenzae (strain PittEE)).